Reading from the N-terminus, the 154-residue chain is Transcriptional repressor NrdR (154 aa).

A zinc finger lies at 3–34 (CPFCSHNDSKVIDSRPTDEGQAIRRRRECISC). An ATP-cone domain is found at 49-139 (LIVVKKNGNR…VYREFKDINT (91 aa)).

The protein belongs to the NrdR family. Requires Zn(2+) as cofactor.

Its function is as follows. Negatively regulates transcription of bacterial ribonucleotide reductase nrd genes and operons by binding to NrdR-boxes. The sequence is that of Transcriptional repressor NrdR from Alkaliphilus oremlandii (strain OhILAs) (Clostridium oremlandii (strain OhILAs)).